Consider the following 965-residue polypeptide: Collagenase ColQ1 (965 aa).

The first 30 residues, 1-30, serve as a signal peptide directing secretion; that stretch reads MNKKSKINKVMLSISTMALSLGALQAPASA. A propeptide spanning residues 31–93 is cleaved from the precursor; sequence EEKVPYNVLK…KAAVKQVKES (63 aa). The segment at 94 to 366 is activator domain; the sequence is YSMADLNKMN…AVEQITTNYN (273 aa). An S1 metalloprotease domain region spans residues 94–765; that stretch reads YSMADLNKMN…VFHGIAKDDG (672 aa). The interval 376-645 is catalytic subdomain; that stretch reads DLEKIRKEGK…MQQLIDNQDK (270 aa). Position 501 (His-501) interacts with Zn(2+). The active site involves Glu-502. Residues His-505 and Glu-533 each contribute to the Zn(2+) site. The segment at 653 to 765 is helper subdomain; it reads DDYLAEHAPK…VFHGIAKDDG (113 aa). Positions 769–850 constitute a PKD domain; that stretch reads APTVNINGPY…ESKSETTVTV (82 aa). Positions 842–867 are disordered; it reads SKSETTVTVKDGSLTESEPNNRPEEA. Over residues 845-859 the composition is skewed to polar residues; the sequence is ETTVTVKDGSLTESE. The interval 853–965 is collagen-binding domain; the sequence is GSLTESEPNN…GDGTYKLSVK (113 aa).

Belongs to the peptidase M9B family. Collagenase subfamily. It depends on Ca(2+) as a cofactor. Zn(2+) is required as a cofactor.

The protein resides in the secreted. The catalysed reaction is Digestion of native collagen in the triple helical region at Xaa-|-Gly bonds. With synthetic peptides, a preference is shown for Gly at P3 and P1', Pro and Ala at P2 and P2', and hydroxyproline, Ala or Arg at P3'.. Its activity is regulated as follows. Strongly inhibited by EDTA. Not inhibited by E-64 and PMSF, broad-spectrum cysteine and serine protease inhibitors. Acts as a true collagenase, which is highly active and cleaves natively folded collagen. In vitro, can also cleave gelatin and the synthetic peptide FALGPA (furylacryloyl-Leu-Gly-Pro-Ala). Causes damage on dermal collagen (COL), resulting in gaps in the tissue, which might lead to an accelerated bacterial infiltration and penetration into deeper sites of the host. The protein is Collagenase ColQ1 of Bacillus cereus (strain Q1).